The chain runs to 393 residues: Methyltransferase-like protein 22 (393 aa).

Residues 54–87 are disordered; that stretch reads WTDSGAEDSGPTDVSTEEMPPAGSGSGHSHEDLS. Ser-120 bears the Phosphoserine mark.

Belongs to the methyltransferase superfamily. METTL22 family. In terms of assembly, interacts with members of the heat shock protein 90 and 70 families; these proteins probably are methylation substrates.

Its subcellular location is the nucleus. The enzyme catalyses L-lysyl-[protein] + 3 S-adenosyl-L-methionine = N(6),N(6),N(6)-trimethyl-L-lysyl-[protein] + 3 S-adenosyl-L-homocysteine + 3 H(+). Protein N-lysine methyltransferase. Trimethylates KIN at Lys-135 (in vitro). This chain is Methyltransferase-like protein 22 (Mettl22), found in Mus musculus (Mouse).